Reading from the N-terminus, the 317-residue chain is Methionyl-tRNA formyltransferase (317 aa).

Position 112–115 (112–115) interacts with (6S)-5,6,7,8-tetrahydrofolate; the sequence is SLLP.

It belongs to the Fmt family.

The enzyme catalyses L-methionyl-tRNA(fMet) + (6R)-10-formyltetrahydrofolate = N-formyl-L-methionyl-tRNA(fMet) + (6S)-5,6,7,8-tetrahydrofolate + H(+). Attaches a formyl group to the free amino group of methionyl-tRNA(fMet). The formyl group appears to play a dual role in the initiator identity of N-formylmethionyl-tRNA by promoting its recognition by IF2 and preventing the misappropriation of this tRNA by the elongation apparatus. The sequence is that of Methionyl-tRNA formyltransferase from Mycobacterium avium (strain 104).